Reading from the N-terminus, the 2799-residue chain is E3 ubiquitin-protein ligase UBR5 (2799 aa).

An N-acetylthreonine modification is found at Thr-2. Residues 77–88 (DRLELGKPDNND) are compositionally biased toward basic and acidic residues. Residues 77–175 (DRLELGKPDN…DRGSGLLGSQ (99 aa)) are disordered. A compositionally biased stretch (polar residues) spans 89-110 (GSKLNSNSGAGRTSRPGRTSDS). Phosphoserine is present on Ser-110. The span at 135–144 (GVGGSGGGSS) shows a compositional bias: gly residues. Positions 184 to 226 (VIPEELISQAQVVLQGKSRSVIIRELQRTNLDVNLAVNNLLSR) constitute a UBA domain. Ser-327 carries the post-translational modification Phosphoserine. Over residues 328–347 (FDNERGSTSKEGEPNLDKKN) the composition is skewed to basic and acidic residues. The disordered stretch occupies residues 328–352 (FDNERGSTSKEGEPNLDKKNTPVQS). Ser-352 and Ser-578 each carry phosphoserine. The disordered stretch occupies residues 579–648 (PESLKNMEKA…APKEEEKVNE (70 aa)). Residues 583–604 (KNMEKASKTTEAKPESKQEPVK) show a composition bias toward basic and acidic residues. Phosphoserine is present on Ser-612. Residues 614-628 (ASTCSDASSIASSAS) are compositionally biased toward low complexity. At Thr-637 the chain carries Phosphothreonine. Ser-808, Ser-928, and Ser-1018 each carry phosphoserine. 2 disordered regions span residues 999–1031 (AGLG…PDPP) and 1052–1075 (TAAT…EPSV). Over residues 1017-1031 (VSPPIAPPSWVPDPP) the composition is skewed to pro residues. Residues 1052–1073 (TAATGTGQGPSTSTIPGPSTEP) show a composition bias toward polar residues. Phosphothreonine occurs at positions 1115 and 1135. The UBR-type zinc-finger motif lies at 1177-1245 (DTCSFTWTGA…EKCKCKTLIA (69 aa)). Zn(2+) is bound by residues Cys-1179, Cys-1196, Cys-1199, Cys-1208, Cys-1211, Cys-1215, His-1216, and His-1219. Ser-1227 carries the phosphoserine modification. The Zn(2+) site is built by Cys-1232, Cys-1234, and Cys-1240. Residues 1299–1318 (REDRNRKTASPEDSDMPDHD) form a disordered region. A phosphoserine mark is found at Ser-1308, Ser-1355, Ser-1375, and Ser-1481. The disordered stretch occupies residues 1515–1740 (SVEPLPPRPS…PSSTSTPAAS (226 aa)). A compositionally biased stretch (low complexity) spans 1524 to 1537 (SSDQSSSSSQSQSS). Positions 1538 to 1553 (YIIRNPQQRRISQSQP) are enriched in polar residues. At Ser-1549 the chain carries Phosphoserine. Composition is skewed to acidic residues over residues 1559-1574 (EEQD…EVEV) and 1605-1614 (HDEDGSDMEL). Residues 1629–1638 (NHSNQDNASG) show a composition bias toward polar residues. Composition is skewed to low complexity over residues 1641 to 1657 (SVVT…ASSV), 1668 to 1681 (SNDS…SSQS), and 1726 to 1740 (AAST…PAAS). Thr-1736 carries the phosphothreonine modification. Ser-1741 is modified (phosphoserine). The residue at position 1746 (Tyr-1746) is a Phosphotyrosine. Ser-1780 is modified (phosphoserine). The segment at 1859-1890 (LASAGDPGHPNHPLHASQNSARRERMTAREEA) is disordered. Over residues 1879–1890 (ARRERMTAREEA) the composition is skewed to basic and acidic residues. Position 1969 is a phosphothreonine (Thr-1969). The segment at 1984-2021 (GIDNEDSEHENDDDTNQSATLNDKDDDSLPAETGQNHP) is disordered. Positions 1985 to 1998 (IDNEDSEHENDDDT) are enriched in acidic residues. 3 positions are modified to phosphoserine: Ser-1990, Ser-2026, and Ser-2028. Position 2030 is a phosphothreonine (Thr-2030). Ser-2076 is modified (phosphoserine). The tract at residues 2117–2142 (RQKKEGEEQPVLPEETESSKPGPSAH) is disordered. Thr-2213 is subject to Phosphothreonine. 2 positions are modified to phosphoserine: Ser-2241 and Ser-2289. Residues 2323–2392 (HTSLMQRLRN…PSDDPEPLPA (70 aa)) form a disordered region. Composition is skewed to basic and acidic residues over residues 2332–2348 (NRGE…EMRR) and 2356–2368 (SRRD…RRQL). Residues 2377-2454 (PASEGNPSDD…AMELIIAHGR (78 aa)) enclose the PABC domain. An HECT domain is found at 2462 to 2799 (LDLGLVDSSE…AIKTKNFGFV (338 aa)). Residues Ser-2469, Ser-2484, and Ser-2486 each carry the phosphoserine modification. The tract at residues 2473–2493 (VQQENRKRHGSSRSVVDMDLD) is disordered. The Glycyl thioester intermediate role is filled by Cys-2768.

It belongs to the UBR5 family. As to quaternary structure, homotetramer; composed of a dimer of dimers. Associates with CDK9 and TFIIS/TCEA1 and forms a transcription regulatory complex made of CDK9, RNAP II, UBR5 and TFIIS/TCEA1 that can stimulate target gene transcription (e.g. gamma fibrinogen/FGG) by recruiting their promoters. Associates with the E3 ligase complex containing DYRK2, EDD/UBR5, DDB1 and DCAF1 proteins (EDVP complex). Binds TOPBP1. Interacts with PIH1D1. Interacts with CIB1. (Microbial infection) Interacts with human T-cell leukemia virus 1/HTLV-1 protein HBZ; this interaction modulates HBZ stability. As to expression, widely expressed. Most abundant in testis and expressed at high levels in brain, pituitary and kidney.

Its subcellular location is the nucleus. It localises to the cytoplasm. The enzyme catalyses S-ubiquitinyl-[E2 ubiquitin-conjugating enzyme]-L-cysteine + [acceptor protein]-L-lysine = [E2 ubiquitin-conjugating enzyme]-L-cysteine + N(6)-ubiquitinyl-[acceptor protein]-L-lysine.. Its pathway is protein modification; protein ubiquitination. Its function is as follows. E3 ubiquitin-protein ligase involved in different protein quality control pathways in the cytoplasm and nucleus. Mainly acts as a ubiquitin chain elongator that extends pre-ubiquitinated substrates. Component of the N-end rule pathway: ubiquitinates proteins bearing specific N-terminal residues that are destabilizing according to the N-end rule, leading to their degradation. Recognizes type-1 N-degrons, containing positively charged amino acids (Arg, Lys and His). Together with UBR4, part of a cytoplasm protein quality control pathway that prevents protein aggregation by catalyzing assembly of heterotypic 'Lys-11'-/'Lys-48'-linked branched ubiquitin chains on aggregated proteins, leading to substrate recognition by the segregase p97/VCP and degradation by the proteasome: UBR5 is probably branching multiple 'Lys-48'-linked chains of substrates initially modified with mixed conjugates by UBR4. Together with ITCH, catalyzes 'Lys-48'-/'Lys-63'-branched ubiquitination of TXNIP, leading to its degradation: UBR5 mediates branching of 'Lys-48'-linked chains of substrates initially modified with 'Lys-63'-linked conjugates by ITCH. Catalytic component of a nuclear protein quality control pathway that mediates ubiquitination and degradation of unpaired transcription factors (i.e. transcription factors that are not assembled into functional multiprotein complexes): specifically recognizes and binds degrons that are not accessible when transcription regulators are associated with their coactivators. Ubiquitinates various unpaired transcription regulator (MYC, SUPT4H1, SUPT5H, CDC20 and MCRS1), as well as ligand-bound nuclear receptors (ESR1, NR1H3, NR3C1, PGR, RARA, RXRA AND VDR) that are not associated with their nuclear receptor coactivators (NCOAs). Involved in maturation and/or transcriptional regulation of mRNA by mediating polyubiquitination and activation of CDK9. Also acts as a regulator of DNA damage response by acting as a suppressor of RNF168, an E3 ubiquitin-protein ligase that promotes accumulation of 'Lys-63'-linked histone H2A and H2AX at DNA damage sites, thereby acting as a guard against excessive spreading of ubiquitinated chromatin at damaged chromosomes. Regulates DNA topoisomerase II binding protein (TopBP1) in the DNA damage response. Ubiquitinates acetylated PCK1. Acts as a positive regulator of the canonical Wnt signaling pathway by mediating (1) ubiquitination and stabilization of CTNNB1, and (2) 'Lys-48'-linked ubiquitination and degradation of TLE3. Promotes disassembly of the mitotic checkpoint complex (MCC) from the APC/C complex by catalyzing ubiquitination of BUB1B, BUB3 and CDC20. Plays an essential role in extraembryonic development. Required for the maintenance of skeletal tissue homeostasis by acting as an inhibitor of hedgehog (HH) signaling. This chain is E3 ubiquitin-protein ligase UBR5 (UBR5), found in Homo sapiens (Human).